Here is a 612-residue protein sequence, read N- to C-terminus: 2-isopropylmalate synthase B (612 aa).

In terms of domain architecture, Pyruvate carboxyltransferase spans 71-344 (VRIFDTTLRD…YTGINTQHIL (274 aa)). A divalent metal cation-binding residues include Asp80, His277, and Asn313.

It belongs to the alpha-IPM synthase/homocitrate synthase family. LeuA type 1 subfamily. In terms of assembly, homodimer. A divalent metal cation serves as cofactor.

The catalysed reaction is 3-methyl-2-oxobutanoate + acetyl-CoA + H2O = (2S)-2-isopropylmalate + CoA + H(+). The protein operates within amino-acid biosynthesis; L-leucine biosynthesis; L-leucine from 3-methyl-2-oxobutanoate: step 1/4. Its function is as follows. Catalyzes the condensation of the acetyl group of acetyl-CoA with 3-methyl-2-oxobutanoate (2-oxoisovalerate) to form 3-carboxy-3-hydroxy-4-methylpentanoate (2-isopropylmalate). The protein is 2-isopropylmalate synthase B (IPMSB) of Solanum pennellii (Tomato).